A 156-amino-acid polypeptide reads, in one-letter code: D-aminoacyl-tRNA deacylase (156 aa).

Positions 137–138 (GP) match the Gly-cisPro motif, important for rejection of L-amino acids motif.

This sequence belongs to the DTD family. As to quaternary structure, homodimer.

It is found in the cytoplasm. The catalysed reaction is glycyl-tRNA(Ala) + H2O = tRNA(Ala) + glycine + H(+). The enzyme catalyses a D-aminoacyl-tRNA + H2O = a tRNA + a D-alpha-amino acid + H(+). In terms of biological role, an aminoacyl-tRNA editing enzyme that deacylates mischarged D-aminoacyl-tRNAs. Also deacylates mischarged glycyl-tRNA(Ala), protecting cells against glycine mischarging by AlaRS. Acts via tRNA-based rather than protein-based catalysis; rejects L-amino acids rather than detecting D-amino acids in the active site. By recycling D-aminoacyl-tRNA to D-amino acids and free tRNA molecules, this enzyme counteracts the toxicity associated with the formation of D-aminoacyl-tRNA entities in vivo and helps enforce protein L-homochirality. The polypeptide is D-aminoacyl-tRNA deacylase (Dictyoglomus turgidum (strain DSM 6724 / Z-1310)).